We begin with the raw amino-acid sequence, 201 residues long: Ras-related protein Rab-35 (201 aa).

Residues Gly18, Val19, Gly20, Lys21, Ser22, Ser23, Ser34, Gly35, Tyr37, Thr39, and Thr40 each contribute to the GTP site. Ser22 is a Mg(2+) binding site. The Switch 1 motif lies at 30-42 (DNTFSGSYITTIG). Thr40 and Asp63 together coordinate Mg(2+). The Switch 2 motif lies at 64–80 (TAGQERFRTITSTYYRG). Gly66 lines the GTP pocket. Thr72 carries the phosphothreonine; by LRRK2 modification. O-(2-cholinephosphoryl)serine is present on Ser75. Residue Tyr77 is modified to O-AMP-tyrosine. 5 residues coordinate GTP: Asn120, Lys121, Asp123, Ala151, and Lys152. 2 S-geranylgeranyl cysteine lipidation sites follow: Cys200 and Cys201.

This sequence belongs to the small GTPase superfamily. Rab family. Interacts with DENND1A and DENND1B; in a nucleotide-dependent manner. Interacts with DENND1C; weak interaction which is nucleotide-independent. Interacts (GTP-bound form) with ACAP2, RUSC2, OCRL MICAL1 and MICALL1; the interaction is direct and probably recruits these effectors to membranes. Interacts with EHD1; the interaction is indirect through MICALL1 and probably recruits EHD1 to membranes. Interacts with GDI1, GDI2, CHM and CHML; phosphorylation at Thr-72 by LRRK2 disrupts these interactions. It depends on Mg(2+) as a cofactor. Post-translationally, phosphorylation at Thr-72 by LRRK2 prevents the association of regulatory proteins including CHM, CHML and GDP dissociation inhibitors GDI1 and GDI2. AMPylation at Tyr-77 by L.pneumophila DrrA occurs in the switch 2 region and leads to moderate inactivation of the GTPase activity. It appears to prolong the lifetime of the GTP state of RAB1B by restricting access of GTPase effectors to switch 2 and blocking effector-stimulated GTP hydrolysis, thereby rendering RAB35 constitutively active. In terms of processing, phosphocholinated by L.pneumophila AnkX. Both GDP-bound and GTP-bound forms can be phosphocholinated. Phosphocholination inhibits the GEF activity of DENND1A.

The protein resides in the cell membrane. Its subcellular location is the membrane. The protein localises to the clathrin-coated pit. It is found in the cytoplasmic vesicle. It localises to the clathrin-coated vesicle. The protein resides in the endosome. Its subcellular location is the melanosome. The catalysed reaction is GTP + H2O = GDP + phosphate + H(+). Regulated by guanine nucleotide exchange factors (GEFs) including DENND1A, DENND1B and DENND1C which promote the exchange of bound GDP for free GTP. Regulated by GTPase activating proteins (GAPs) including TBC1D10 and TBC1D13 which increase GTP hydrolysis activity. Inhibited by GDP dissociation inhibitors (GDIs) which prevent Rab-GDP dissociation. In terms of biological role, the small GTPases Rab are key regulators of intracellular membrane trafficking, from the formation of transport vesicles to their fusion with membranes. Rabs cycle between an inactive GDP-bound form and an active GTP-bound form that is able to recruit to membranes different sets of downstream effectors directly responsible for vesicle formation, movement, tethering and fusion. RAB35 is involved in the process of endocytosis and is an essential rate-limiting regulator of the fast recycling pathway back to the plasma membrane. During cytokinesis, required for the postfurrowing terminal steps, namely for intercellular bridge stability and abscission, possibly by controlling phosphatidylinositol 4,5-bis phosphate (PIP2) and SEPT2 localization at the intercellular bridge. May indirectly regulate neurite outgrowth. Together with TBC1D13 may be involved in regulation of insulin-induced glucose transporter SLC2A4/GLUT4 translocation to the plasma membrane in adipocytes. This Homo sapiens (Human) protein is Ras-related protein Rab-35.